A 491-amino-acid chain; its full sequence is Feruloyl-CoA synthase (491 aa).

T154 lines the Mg(2+) pocket. ATP is bound by residues A199, G291, and T295. E296 is a Mg(2+) binding site. Positions 374 and 391 each coordinate ATP.

This sequence belongs to the ATP-dependent AMP-binding enzyme family. Requires Mg(2+) as cofactor.

It catalyses the reaction (E)-ferulate + ATP + CoA = (E)-feruloyl-CoA + AMP + diphosphate. In terms of biological role, catalyzes the formation of (E)-feruloyl-CoA, AMP and diphosphate from (E)-ferulate, CoA and ATP. Involved in the degradation pathway of lignin-derived aromatic compounds of plant cell walls. Catalyzes the first enzymatic step in the conversion of ferulic acid into high value compound vanillin. This chain is Feruloyl-CoA synthase, found in Amycolatopsis sp.